Reading from the N-terminus, the 207-residue chain is Gap junction epsilon-1 protein (207 aa).

Over 1–22 the chain is Cytoplasmic; sequence MSLNYIKNFYEGCLRPPTVIGQ. The chain crosses the membrane as a helical span at residues 23 to 43; it reads FHTLFFGSVRTFFLGVLGFAV. Topologically, residues 44–74 are extracellular; the sequence is YGNEALHFSCDPDKRELNLYCYNQFRPITPQ. 2 disulfide bridges follow: cysteine 53–cysteine 161 and cysteine 64–cysteine 147. Residues 75 to 95 form a helical membrane-spanning segment; it reads VFWALQLVTVLVPGAVFHLYA. The Cytoplasmic segment spans residues 96–111; sequence ACKNIDQEEILHRPMS. The chain crosses the membrane as a helical span at residues 112 to 132; the sequence is TVFYIISVLLRIILEVLAFWL. The Extracellular segment spans residues 133 to 175; sequence QSHLFGFLVDPIFMCDVTGLGKILNVSKCMVPEHFEKTIFLSA. Residues 176–196 form a helical membrane-spanning segment; sequence MYTFTIITILLCIAEIFEILF. Over 197–207 the chain is Cytoplasmic; the sequence is RRLGYLNQPMT.

Belongs to the connexin family. Beta-type (group I) subfamily. In terms of assembly, a connexon is composed of a hexamer of connexins.

The protein localises to the cell membrane. Functionally, has significant hemichannel activity. However, has only low-efficiency gap junction activity and probably does not function as a gap junction channel in vivo. This Danio rerio (Zebrafish) protein is Gap junction epsilon-1 protein.